The primary structure comprises 181 residues: Large ribosomal subunit protein uL6 (181 aa).

This sequence belongs to the universal ribosomal protein uL6 family. Part of the 50S ribosomal subunit.

In terms of biological role, this protein binds to the 23S rRNA, and is important in its secondary structure. It is located near the subunit interface in the base of the L7/L12 stalk, and near the tRNA binding site of the peptidyltransferase center. This chain is Large ribosomal subunit protein uL6, found in Rhodopirellula baltica (strain DSM 10527 / NCIMB 13988 / SH1).